A 417-amino-acid chain; its full sequence is UDP-N-acetylglucosamine 1-carboxyvinyltransferase 2 (417 aa).

A phosphoenolpyruvate-binding site is contributed by 22–23; it reads KN. Arg-94 provides a ligand contact to UDP-N-acetyl-alpha-D-glucosamine. Residue Cys-118 is the Proton donor of the active site. Cys-118 is subject to 2-(S-cysteinyl)pyruvic acid O-phosphothioketal. Residues 123–127, Asp-306, and Ile-328 contribute to the UDP-N-acetyl-alpha-D-glucosamine site; that span reads RPIDL.

Belongs to the EPSP synthase family. MurA subfamily.

It is found in the cytoplasm. It catalyses the reaction phosphoenolpyruvate + UDP-N-acetyl-alpha-D-glucosamine = UDP-N-acetyl-3-O-(1-carboxyvinyl)-alpha-D-glucosamine + phosphate. The protein operates within cell wall biogenesis; peptidoglycan biosynthesis. In terms of biological role, cell wall formation. Adds enolpyruvyl to UDP-N-acetylglucosamine. The sequence is that of UDP-N-acetylglucosamine 1-carboxyvinyltransferase 2 from Clostridium tetani (strain Massachusetts / E88).